Reading from the N-terminus, the 252-residue chain is Fructose-1,6-bisphosphatase/inositol-1-monophosphatase (252 aa).

Mg(2+)-binding residues include Glu-65, Asp-81, Ile-83, and Asp-84. Substrate is bound by residues 84 to 86 (DGS), Arg-170, Phe-175, and Arg-194. Asp-201 contributes to the Mg(2+) binding site.

This sequence belongs to the inositol monophosphatase superfamily. FBPase class 4 family. As to quaternary structure, homodimer. The cofactor is Mg(2+).

The catalysed reaction is beta-D-fructose 1,6-bisphosphate + H2O = beta-D-fructose 6-phosphate + phosphate. The enzyme catalyses a myo-inositol phosphate + H2O = myo-inositol + phosphate. With respect to regulation, IMPase activity is inhibited by Ca(2+) and Zn(2+). In contrast to mammalian I-1-P phosphatases, is not inhibited by Li(+) up to 100 mM. In terms of biological role, phosphatase with broad specificity; it can dephosphorylate fructose 1,6-bisphosphate, both D and L isomers of inositol-1-phosphate (I-1-P), 2'-AMP, pNPP, beta-glycerol phosphate, and alpha-D-glucose-1-phosphate. Cannot hydrolyze glucose-6-phosphate, fructose-6-phosphate, NAD(+) or 5'-AMP. May be involved in the biosynthesis of a unique osmolyte, di-myo-inositol 1,1-phosphate. This is Fructose-1,6-bisphosphatase/inositol-1-monophosphatase (suhB) from Methanocaldococcus jannaschii (strain ATCC 43067 / DSM 2661 / JAL-1 / JCM 10045 / NBRC 100440) (Methanococcus jannaschii).